Here is a 510-residue protein sequence, read N- to C-terminus: 2,3-bisphosphoglycerate-independent phosphoglycerate mutase (510 aa).

Positions 13 and 63 each coordinate Mn(2+). Serine 63 acts as the Phosphoserine intermediate in catalysis. Substrate is bound by residues histidine 124, 154–155 (RD), arginine 186, arginine 192, 262–265 (RADR), and lysine 334. Mn(2+) contacts are provided by aspartate 401, histidine 405, aspartate 442, histidine 443, and histidine 461.

This sequence belongs to the BPG-independent phosphoglycerate mutase family. In terms of assembly, monomer. Requires Mn(2+) as cofactor.

It catalyses the reaction (2R)-2-phosphoglycerate = (2R)-3-phosphoglycerate. The protein operates within carbohydrate degradation; glycolysis; pyruvate from D-glyceraldehyde 3-phosphate: step 3/5. Functionally, catalyzes the interconversion of 2-phosphoglycerate and 3-phosphoglycerate. In Vibrio campbellii (strain ATCC BAA-1116), this protein is 2,3-bisphosphoglycerate-independent phosphoglycerate mutase.